Consider the following 572-residue polypeptide: MSFKMDREEYAQHYGPTVGDSVRLGDTNLFAAIEKDFTVYGQESKFGGGKVLRDGMGVSATETRDNPSVVDTIITGATIIDYTGIIKADIGIRDGKIVAIGRGGNPDTMDNVDFVVGASTEAIAAEGLIVTAGGIDLHVHYISADLPEFGMDNGITTLFGGGTGPADGSNATTCTPGKFHITRMLQAVDDMPANFGFLAKGVGSETEVVEEQIKAGAAGIKTHEDWGATYAGIDNSLKVADKYDVSFAVHTDSLNEGGFMENTLESFQGRTVHTFHTEGSGGGHAPDIMVFAGKENILPSSTNPTNPYTTNAIGELLDMVMVCHHLDPKIPEDVSFAESRVRKQTVAAEDVLHDMGALSIMTSDAMAMGRVGEVVMRCWQLADKMKAQRGPLEGDSEFNDNNRIKRYVAKYTINPAITNGIADYIGSVEVGKFADLVIWEPAQFGAKPKLVLKGGMLTYGVMGDAGSSLPTPQPRIMRKLYGAYGQAVHKTNITFVSQYAYDHGIKEEIGLNKIVLPVKNTRNLTKRDMKLNDYAPKTIRIDPQTFDVFIDDELVTCEPIHTTSLSQRYFLF.

Residues 133–572 (GGIDLHVHYI…TSLSQRYFLF (440 aa)) form the Urease domain. Ni(2+) contacts are provided by His-138, His-140, and Lys-221. Lys-221 carries the post-translational modification N6-carboxylysine. Position 223 (His-223) interacts with substrate. Ni(2+)-binding residues include His-250 and His-276. Catalysis depends on His-324, which acts as the Proton donor. Ni(2+) is bound at residue Asp-364.

This sequence belongs to the metallo-dependent hydrolases superfamily. Urease alpha subunit family. Heterotrimer of UreA (gamma), UreB (beta) and UreC (alpha) subunits. Three heterotrimers associate to form the active enzyme. It depends on Ni cation as a cofactor. In terms of processing, carboxylation allows a single lysine to coordinate two nickel ions.

It localises to the cytoplasm. It carries out the reaction urea + 2 H2O + H(+) = hydrogencarbonate + 2 NH4(+). It participates in nitrogen metabolism; urea degradation; CO(2) and NH(3) from urea (urease route): step 1/1. This is Urease subunit alpha from Streptococcus thermophilus (strain CNRZ 1066).